Here is a 193-residue protein sequence, read N- to C-terminus: Peptidyl-tRNA hydrolase (193 aa).

H17 provides a ligand contact to tRNA. H22 (proton acceptor) is an active-site residue. The tRNA site is built by F68, N70, and N116.

The protein belongs to the PTH family. In terms of assembly, monomer.

The protein localises to the cytoplasm. It catalyses the reaction an N-acyl-L-alpha-aminoacyl-tRNA + H2O = an N-acyl-L-amino acid + a tRNA + H(+). Hydrolyzes ribosome-free peptidyl-tRNAs (with 1 or more amino acids incorporated), which drop off the ribosome during protein synthesis, or as a result of ribosome stalling. Its function is as follows. Catalyzes the release of premature peptidyl moieties from peptidyl-tRNA molecules trapped in stalled 50S ribosomal subunits, and thus maintains levels of free tRNAs and 50S ribosomes. The polypeptide is Peptidyl-tRNA hydrolase (Xanthomonas campestris pv. campestris (strain ATCC 33913 / DSM 3586 / NCPPB 528 / LMG 568 / P 25)).